A 245-amino-acid polypeptide reads, in one-letter code: Uridylate kinase (245 aa).

ATP is bound at residue 20–23 (KLSG). A UMP-binding site is contributed by glycine 60. Glycine 61 and arginine 65 together coordinate ATP. Residues aspartate 80 and 141–148 (AGLPYFST) contribute to the UMP site. 2 residues coordinate ATP: tyrosine 175 and aspartate 178.

The protein belongs to the UMP kinase family. In terms of assembly, homohexamer.

The protein localises to the cytoplasm. The catalysed reaction is UMP + ATP = UDP + ADP. The protein operates within pyrimidine metabolism; CTP biosynthesis via de novo pathway; UDP from UMP (UMPK route): step 1/1. Inhibited by UTP. Functionally, catalyzes the reversible phosphorylation of UMP to UDP. In Paenarthrobacter aurescens (strain TC1), this protein is Uridylate kinase.